A 93-amino-acid chain; its full sequence is Small ribosomal subunit protein bS18 (93 aa).

The protein belongs to the bacterial ribosomal protein bS18 family. As to quaternary structure, part of the 30S ribosomal subunit. Forms a tight heterodimer with protein bS6.

Functionally, binds as a heterodimer with protein bS6 to the central domain of the 16S rRNA, where it helps stabilize the platform of the 30S subunit. The protein is Small ribosomal subunit protein bS18 of Paracidovorax citrulli (strain AAC00-1) (Acidovorax citrulli).